The sequence spans 209 residues: Putative thymidylate synthase (209 aa).

The active site involves Cys-137.

It belongs to the thymidylate synthase family. Archaeal-type ThyA subfamily. As to quaternary structure, monomer.

The protein localises to the cytoplasm. It participates in pyrimidine metabolism; dTTP biosynthesis. May catalyze the biosynthesis of dTMP using an unknown cosubstrate. In Methanopyrus kandleri (strain AV19 / DSM 6324 / JCM 9639 / NBRC 100938), this protein is Putative thymidylate synthase.